A 342-amino-acid chain; its full sequence is Probable dual-specificity RNA methyltransferase RlmN (342 aa).

Glu91 functions as the Proton acceptor in the catalytic mechanism. Residues 97-326 (YKFGNTACVS…CTVRRELGSD (230 aa)) form the Radical SAM core domain. A disulfide bond links Cys104 and Cys331. 3 residues coordinate [4Fe-4S] cluster: Cys111, Cys115, and Cys118. Residues 157-158 (GE), Ser189, 212-214 (SLH), and Asn288 contribute to the S-adenosyl-L-methionine site. The S-methylcysteine intermediate role is filled by Cys331.

Belongs to the radical SAM superfamily. RlmN family. The cofactor is [4Fe-4S] cluster.

The protein resides in the cytoplasm. The enzyme catalyses adenosine(2503) in 23S rRNA + 2 reduced [2Fe-2S]-[ferredoxin] + 2 S-adenosyl-L-methionine = 2-methyladenosine(2503) in 23S rRNA + 5'-deoxyadenosine + L-methionine + 2 oxidized [2Fe-2S]-[ferredoxin] + S-adenosyl-L-homocysteine. The catalysed reaction is adenosine(37) in tRNA + 2 reduced [2Fe-2S]-[ferredoxin] + 2 S-adenosyl-L-methionine = 2-methyladenosine(37) in tRNA + 5'-deoxyadenosine + L-methionine + 2 oxidized [2Fe-2S]-[ferredoxin] + S-adenosyl-L-homocysteine. Its function is as follows. Specifically methylates position 2 of adenine 2503 in 23S rRNA and position 2 of adenine 37 in tRNAs. In Caldanaerobacter subterraneus subsp. tengcongensis (strain DSM 15242 / JCM 11007 / NBRC 100824 / MB4) (Thermoanaerobacter tengcongensis), this protein is Probable dual-specificity RNA methyltransferase RlmN.